The primary structure comprises 663 residues: Translation factor GUF1 homolog, mitochondrial (663 aa).

The N-terminal 33 residues, 1-33 (MAGAAALRRSARRVVLPGAYALSRALQHPERLL), are a transit peptide targeting the mitochondrion. The tr-type G domain maps to 55-247 (ERVRNFSIIA…AVIERIPSPP (193 aa)). GTP contacts are provided by residues 64 to 71 (AHVDHGKS), 140 to 144 (DTPGH), and 194 to 197 (NKID).

It belongs to the TRAFAC class translation factor GTPase superfamily. Classic translation factor GTPase family. LepA subfamily.

Its subcellular location is the mitochondrion inner membrane. The enzyme catalyses GTP + H2O = GDP + phosphate + H(+). Its function is as follows. Promotes mitochondrial protein synthesis. May act as a fidelity factor of the translation reaction, by catalyzing a one-codon backward translocation of tRNAs on improperly translocated ribosomes. Binds to mitochondrial ribosomes in a GTP-dependent manner. The protein is Translation factor GUF1 homolog, mitochondrial of Oryza sativa subsp. japonica (Rice).